Consider the following 463-residue polypeptide: Probable cysteine protease RD21B (463 aa).

The first 21 residues, 1-21 (MGFLKLSPMILLLAMIGVSYA), serve as a signal peptide directing secretion. The propeptide at 22 to 137 (MDMSIISYDE…DRYQARVGDA (116 aa)) is activation peptide. An N-linked (GlcNAc...) asparagine glycan is attached at Asn92. 5 cysteine pairs are disulfide-bonded: Cys159–Cys201, Cys193–Cys234, Cys292–Cys343, Cys376–Cys388, and Cys382–Cys403. The active site involves Cys162. Residues His298 and Asn318 contribute to the active site. The propeptide at 354-463 (KKGQNPPNPG…FWAKSRKHIA (110 aa)) is removed in mature form. A glycan (N-linked (GlcNAc...) asparagine) is linked at Asn415.

The protein belongs to the peptidase C1 family. In terms of assembly, interacts with PRN2. Interacts with WSCP.

Functionally, probable thiol protease. In Arabidopsis thaliana (Mouse-ear cress), this protein is Probable cysteine protease RD21B.